The following is a 234-amino-acid chain: HTH-type transcriptional regulator ArcR (234 aa).

Position 40 to 129 (40 to 129 (VRHYTKGQVI…MAFLCKANDD (90 aa))) interacts with a nucleoside 3',5'-cyclic phosphate. The 74-residue stretch at 155-228 (KFAKDRIIKL…HKNWLVSKHL (74 aa)) folds into the HTH crp-type domain. The segment at residues 188-207 (IQLMSDMAGISRETAGHIIH) is a DNA-binding region (H-T-H motif).

The protein resides in the cytoplasm. Positively regulates the expression of the arcABDCR operon under anaerobic conditions, thus playing an essential role in arginine catabolism. May also control the expression of genes encoding proteins which are involved in anaerobic metabolism. Can bind cyclic AMP. The polypeptide is HTH-type transcriptional regulator ArcR (arcR) (Staphylococcus aureus (strain USA300 / TCH1516)).